The primary structure comprises 86 residues: Probable protein BRICK1 (86 aa).

Residues Glu-47 to Asn-81 are a coiled coil.

It belongs to the BRK1 family. As to quaternary structure, binds SCAR.

The protein resides in the cytoplasm. The protein localises to the cytoskeleton. Involved in regulation of actin and microtubule organization. Part of a WAVE complex that activates the Arp2/3 complex. This Oryza sativa subsp. japonica (Rice) protein is Probable protein BRICK1.